We begin with the raw amino-acid sequence, 837 residues long: Putative outer membrane protein assembly factor TP_0326 (837 aa).

The first 21 residues, M1–A21, serve as a signal peptide directing secretion. Residues Q22–A433 are Periplasmic-facing. POTRA domains are found at residues K31–R105, P106–G182, T185–G273, Y276–R354, and S357–Q430. Residues N434–S442 traverse the membrane as a beta stranded segment. Residues G443–F450 lie on the Extracellular; loop L1 side of the membrane. The chain crosses the membrane as a beta stranded span at residues P451–K461. The Periplasmic segment spans residues N462–N468. A beta stranded transmembrane segment spans residues E469–L476. The Extracellular; loop L2 portion of the chain corresponds to G477–S478. A beta stranded membrane pass occupies residues E479–E489. Topologically, residues R490–V499 are periplasmic. The beta stranded transmembrane segment at G500–N520 threads the bilayer. The Extracellular; loop L3 segment spans residues G521–E530. A beta stranded membrane pass occupies residues Q531–R543. Topologically, residues L544–G554 are periplasmic. Residues A555–I568 form a beta stranded membrane-spanning segment. At R569–W601 the chain is on the extracellular; loop L4 side. The chain crosses the membrane as a beta stranded span at residues T602–G615. The Periplasmic portion of the chain corresponds to R616–S623. A beta stranded transmembrane segment spans residues S624–G636. Residues L637–E644 lie on the Extracellular; loop L5 side of the membrane. The chain crosses the membrane as a beta stranded span at residues H645–T658. At L659–V667 the chain is on the periplasmic side. A beta stranded transmembrane segment spans residues W668 to V682. Residues Q683–G724 are Extracellular; loop L6-facing. A beta stranded membrane pass occupies residues D725–W736. Over P737–G741 the chain is Periplasmic. A beta stranded membrane pass occupies residues I742–N756. The Extracellular; loop L7 segment spans residues I757–G786. The interval S761 to E785 is disordered. Residues S765–S784 show a composition bias toward low complexity. Residues L787–T799 form a beta stranded membrane-spanning segment. Residues L800–Q802 are Periplasmic-facing. Residues F803–T814 form a beta stranded membrane-spanning segment. Over S815–K824 the chain is Extracellular; loop L8. A beta stranded membrane pass occupies residues N825–V829. At L830–L837 the chain is on the periplasmic side.

The protein belongs to the BamA family. Part of 2 complexes of about 239 and 164 kDa.

Its subcellular location is the cell outer membrane. Functionally, might be part of the outer membrane protein assembly complex, which is involved in assembly and insertion of beta-barrel proteins into the outer membrane. Its function is as follows. Both rabbit immune serum and rabbit antiserum specific for extracytoplasmic loop L4 promote bacteria internalization by rabbit peritoneal macrophages. Pools of human syphilitic sera from the USA and Columbia recognize both the N-terminal POTRA-containing and C-terminal beta-barrel domains as well as loop L4, showing this protein stimulates the immune system in both humans and rabbits. The protein is Putative outer membrane protein assembly factor TP_0326 (tp92) of Treponema pallidum (strain Nichols).